The following is an 83-amino-acid chain: Small ribosomal subunit protein bS16 (83 aa).

It belongs to the bacterial ribosomal protein bS16 family.

This chain is Small ribosomal subunit protein bS16, found in Pseudomonas fluorescens (strain ATCC BAA-477 / NRRL B-23932 / Pf-5).